The sequence spans 205 residues: Protein Nef (205 aa).

A lipid anchor (N-myristoyl glycine; by host) is attached at Gly2. Ser6 is modified (phosphoserine; by host). Positions Glu62 to Asp65 are acidic; interacts with host PACS1 and PACS2; stabilizes the interaction of NEF/MHC-I with host AP1M1; necessary for MHC-I internalization. An SH3-binding; interaction with Src family tyrosine kinases region spans residues Pro69 to Pro78. Residues Pro72–Pro75 carry the PxxP; stabilizes the interaction of NEF/MHC-I with host AP1M1; necessary for MHC-I internalization motif. Residues Glu108 to Trp124 are mediates dimerization, Nef-PTE1 interaction. Positions Val148–Val180 are binding to ATP6V1H. The short motif at Leu164 to Leu165 is the Dileucine internalization motif; necessary for CD4 internalization element. Residues Asp174–Asp175 carry the Diacidic; necessary for CD4 internalization motif.

The protein belongs to the lentivirus primate group Nef protein family. Monomer; cytosolic form. Homodimer; membrane bound form. Interacts with Nef associated p21-activated kinase (PAK2); this interaction activates PAK2. Associates with the Nef-MHC-I-AP1 complex; this complex is required for MHC-I internalization. Interacts (via C-terminus) with host PI3-kinase. Interacts with host PACS1; this interaction seems to be weak. Interacts with host PACS2. Interacts with host LCK and MAPK3; these interactions inhibit the kinase activity of the latter. Interacts with host ATP6V1H; this interaction may play a role in CD4 endocytosis. Associates with the CD4-Nef-AP2 complex; this complex is required for CD4 internalization. Interacts with host AP2 subunit alpha and AP2 subunit sigma2. Interacts with TCR-zeta chain; this interaction up-regulates the Fas ligand (FasL) surface expression. Interacts with host HCK, LYN, and SRC; these interactions activate the Src family kinases. Interacts with MAP3K5; this interaction inhibits the Fas and TNFR-mediated death signals. Interacts with beta-COP and PTE1. Interacts with human RACK1; this increases Nef phosphorylation by PKC. Interacts with TP53; this interaction decreases the half-life of TP53, protecting the infected cell against p53-mediated apoptosis. The virion-associated Nef proteins are cleaved by the viral protease to release the soluble C-terminal core protein. Nef is probably cleaved concomitantly with viral structural proteins on maturation of virus particles. Post-translationally, myristoylated. In terms of processing, phosphorylated on serine residues, probably by host PKCdelta and theta.

It localises to the host cell membrane. The protein localises to the virion. It is found in the secreted. The protein resides in the host Golgi apparatus membrane. Its function is as follows. Factor of infectivity and pathogenicity, required for optimal virus replication. Alters numerous pathways of T-lymphocyte function and down-regulates immunity surface molecules in order to evade host defense and increase viral infectivity. Alters the functionality of other immunity cells, like dendritic cells, monocytes/macrophages and NK cells. In terms of biological role, in infected CD4(+) T-lymphocytes, down-regulates the surface MHC-I, mature MHC-II, CD4, CD28, CCR5 and CXCR4 molecules. Mediates internalization and degradation of host CD4 through the interaction of with the cytoplasmic tail of CD4, the recruitment of AP-2 (clathrin adapter protein complex 2), internalization through clathrin coated pits, and subsequent transport to endosomes and lysosomes for degradation. Diverts host MHC-I molecules to the trans-Golgi network-associated endosomal compartments by an endocytic pathway to finally target them for degradation. MHC-I down-regulation may involve AP-1 (clathrin adapter protein complex 1) or possibly Src family kinase-ZAP70/Syk-PI3K cascade recruited by PACS2. In consequence infected cells are masked for immune recognition by cytotoxic T-lymphocytes. Decreasing the number of immune receptors also prevents reinfection by more HIV particles (superinfection). Down-regulates host SERINC3 and SERINC5 thereby excluding these proteins from the viral particles. Virion infectivity is drastically higher when SERINC3 or SERINC5 are excluded from the viral envelope, because these host antiviral proteins impair the membrane fusion event necessary for subsequent virion penetration. Functionally, bypasses host T-cell signaling by inducing a transcriptional program nearly identical to that of anti-CD3 cell activation. Interaction with TCR-zeta chain up-regulates the Fas ligand (FasL). Increasing surface FasL molecules and decreasing surface MHC-I molecules on infected CD4(+) cells send attacking cytotoxic CD8+ T-lymphocytes into apoptosis. Plays a role in optimizing the host cell environment for viral replication without causing cell death by apoptosis. Protects the infected cells from apoptosis in order to keep them alive until the next virus generation is ready to strike. Inhibits the Fas and TNFR-mediated death signals by blocking MAP3K5/ASK1. Decreases the half-life of TP53, protecting the infected cell against p53-mediated apoptosis. Inhibits the apoptotic signals regulated by the Bcl-2 family proteins through the formation of a Nef/PI3-kinase/PAK2 complex that leads to activation of PAK2 and induces phosphorylation of host BAD. Its function is as follows. Extracellular Nef protein targets CD4(+) T-lymphocytes for apoptosis by interacting with CXCR4 surface receptors. This Human immunodeficiency virus type 1 group M subtype A (isolate U455) (HIV-1) protein is Protein Nef.